Reading from the N-terminus, the 338-residue chain is Phenylalanine--tRNA ligase alpha subunit (338 aa).

Residue Glu253 coordinates Mg(2+).

It belongs to the class-II aminoacyl-tRNA synthetase family. Phe-tRNA synthetase alpha subunit type 1 subfamily. Tetramer of two alpha and two beta subunits. Mg(2+) is required as a cofactor.

It is found in the cytoplasm. The catalysed reaction is tRNA(Phe) + L-phenylalanine + ATP = L-phenylalanyl-tRNA(Phe) + AMP + diphosphate + H(+). This chain is Phenylalanine--tRNA ligase alpha subunit, found in Geotalea daltonii (strain DSM 22248 / JCM 15807 / FRC-32) (Geobacter daltonii).